A 307-amino-acid polypeptide reads, in one-letter code: Serine/threonine-protein phosphatase 4 catalytic subunit (307 aa).

At Ala2 the chain carries N-acetylalanine. Positions 54, 56, 82, and 114 each coordinate Mn(2+). His115 serves as the catalytic Proton donor. Residues His164 and His238 each contribute to the Mn(2+) site. Leu307 carries the leucine methyl ester modification.

It belongs to the PPP phosphatase family. PP-4 (PP-X) subfamily. In terms of assembly, serine/threonine-protein phosphatase 4 (PP4) occurs in different assemblies of the catalytic and one or more regulatory subunits. Component of the PP4 complexes PPP4C-PPP4R1, PPP4C-PPP4R2, PPP4C-PPP4R2-PPP4R3A, PPP4C-PPP4R2-PPP4R3B and PPP4C-PPP4R4. The PPP4C-PPP4R2 complex appears to be a tetramer composed of 2 molecules of PPP4C and 2 molecules of PPP4R2. Interacts with REL, NFKB1/p50 and RELA. Interacts with SMN1 and GEMIN4. Interacts with IRS4 (phosphorylated). Interacts with SMEK1/PPP4R3A; the interaction requires PP4R2. Interacts with HDAC3. It depends on Mn(2+) as a cofactor. Post-translationally, methylation at the C-terminal Leu-307 is critical for interactions with regulatory subunits and functions in DNA repair.

The protein resides in the cytoplasm. The protein localises to the nucleus. It localises to the cytoskeleton. Its subcellular location is the microtubule organizing center. It is found in the centrosome. The enzyme catalyses O-phospho-L-seryl-[protein] + H2O = L-seryl-[protein] + phosphate. It carries out the reaction O-phospho-L-threonyl-[protein] + H2O = L-threonyl-[protein] + phosphate. Functionally, protein phosphatase that is involved in many processes such as microtubule organization at centrosomes, maturation of spliceosomal snRNPs, apoptosis, DNA repair, tumor necrosis factor (TNF)-alpha signaling, activation of c-Jun N-terminal kinase MAPK8, regulation of histone acetylation, DNA damage checkpoint signaling, NF-kappa-B activation and cell migration. The PPP4C-PPP4R1 PP4 complex may play a role in dephosphorylation and regulation of HDAC3. The PPP4C-PPP4R2-PPP4R3A PP4 complex specifically dephosphorylates H2AX phosphorylated on Ser-140 (gamma-H2AX) generated during DNA replication and required for DNA double strand break repair. Dephosphorylates NDEL1 at CDK1 phosphorylation sites and negatively regulates CDK1 activity in interphase. In response to DNA damage, catalyzes RPA2 dephosphorylation, an essential step for DNA repair since it allows the efficient RPA2-mediated recruitment of RAD51 to chromatin. The chain is Serine/threonine-protein phosphatase 4 catalytic subunit (PPP4C) from Homo sapiens (Human).